A 260-amino-acid chain; its full sequence is Transcription factor SUM-1 (260 aa).

The 52-residue stretch at 112–163 (DKRKAATLRERRRLRKVNEAFEALKRHTCANPNQRLPKVEILRNAIEYIEKL) folds into the bHLH domain. The tract at residues 171–208 (KANGDSEMDSAETSSNTSDAMTDGSSPGSYSSDKAQQY) is disordered. Polar residues predominate over residues 181-205 (AETSSNTSDAMTDGSSPGSYSSDKA).

In terms of assembly, efficient DNA binding requires dimerization with another bHLH protein. Homodimer, and heterodimer with the ubiquitous bHLH protein E12.

The protein localises to the nucleus. Regulatory factor during embryogenesis. Conversion of pluripotent secondary mesenchyme cells to myogenic cells. It binds to the MCK enhancer element. This chain is Transcription factor SUM-1 (SUM-1), found in Lytechinus variegatus (Green sea urchin).